A 1070-amino-acid polypeptide reads, in one-letter code: DNA-directed RNA polymerase subunit beta (1070 aa).

This sequence belongs to the RNA polymerase beta chain family. As to quaternary structure, in plastids the minimal PEP RNA polymerase catalytic core is composed of four subunits: alpha, beta, beta', and beta''. When a (nuclear-encoded) sigma factor is associated with the core the holoenzyme is formed, which can initiate transcription.

Its subcellular location is the plastid. The protein localises to the chloroplast. It catalyses the reaction RNA(n) + a ribonucleoside 5'-triphosphate = RNA(n+1) + diphosphate. Its function is as follows. DNA-dependent RNA polymerase catalyzes the transcription of DNA into RNA using the four ribonucleoside triphosphates as substrates. The chain is DNA-directed RNA polymerase subunit beta from Solanum bulbocastanum (Wild potato).